The chain runs to 467 residues: Zinc finger protein 410 (467 aa).

Disordered stretches follow at residues 84–111 and 187–214; these read PDGE…SLLQ and NAKT…PLPQ. 5 consecutive C2H2-type zinc fingers follow at residues 219–243, 249–273, 279–303, 309–333, and 339–362; these read LKCT…LKTH, FICP…MRTH, FVCP…LRIH, FLCE…LVVH, and HQCQ…RKHH. The Zn(2+) site is built by Cys-221, Cys-226, His-239, His-243, Cys-251, Cys-256, His-269, His-273, Cys-281, Cys-286, His-299, His-303, Cys-311, Cys-316, His-329, His-333, Cys-341, Cys-344, His-357, and His-361.

Interacts with CDKN2A/p14ARF. In terms of processing, O-glycosylated. O-GlcNAcylation may occur in response to increasing glucose levels and affect transcription factor activity. Sumoylated. Sumoylation increases its half-life, possibly by blocking ubiquitin-mediated degradation.

The protein localises to the nucleus. Its subcellular location is the chromosome. In terms of biological role, transcription factor that binds to the sequence motif 5'-CATCCCATAATA-3', and is specifically required to silence expression of fetal hemoglobin in adult erythroid cells. Prevents expression of fetal hemoglobin genes HBG1 and HBG2 through CHD4: acts as a direct transcriptional activator of CHD4, a central component of the NuRD complex that represses transcription of fetal hemoglobin genes HBG1 and HBG2 in erythroid cells. May also activate transcription of matrix-remodeling genes such as MMP1 during fibroblast senescence. May activate transcription of the gap junction gene GJC1, perhaps in response to increasing glucose. However, recent studies suggest that ZNF410 is dedicated to regulate expression of a single gene: CHD4. This Bos taurus (Bovine) protein is Zinc finger protein 410.